The following is a 290-amino-acid chain: uncharacterized protein (290 aa).

The next 7 helical transmembrane spans lie at 40–60, 80–100, 110–130, 139–159, 166–188, 200–220, and 238–260; these read MHVILLSALFYQIINILSPVI, DAHVVSSVQSIVLICLGYTCL, LFGYSVVAGDIYALTAGYFVW, VHITGIGFVIHAIAALFVITF, MYYGPTYLSWELSTPFLNIHYFL, MINGFILIVTFICVRIAWGWF, and WALSLFYLAANMSLNCLNLFWVS. The TLC domain maps to 74–271; that stretch reads KTRLNWDAHV…MIDAIRRRAH (198 aa).

It localises to the endoplasmic reticulum membrane. This is an uncharacterized protein from Schizosaccharomyces pombe (strain 972 / ATCC 24843) (Fission yeast).